We begin with the raw amino-acid sequence, 249 residues long: Aliphatic sulfonates import ATP-binding protein SsuB 2 (249 aa).

In terms of domain architecture, ABC transporter spans 5–233 (LDLLEIRKAY…PRDRRAVELA (229 aa)). 37 to 44 (GPSGCGKS) contacts ATP.

It belongs to the ABC transporter superfamily. Aliphatic sulfonates importer (TC 3.A.1.17.2) family. In terms of assembly, the complex is composed of two ATP-binding proteins (SsuB), two transmembrane proteins (SsuC) and a solute-binding protein (SsuA).

The protein resides in the cell inner membrane. The catalysed reaction is ATP + H2O + aliphatic sulfonate-[sulfonate-binding protein]Side 1 = ADP + phosphate + aliphatic sulfonateSide 2 + [sulfonate-binding protein]Side 1.. Part of the ABC transporter complex SsuABC involved in aliphatic sulfonates import. Responsible for energy coupling to the transport system. This chain is Aliphatic sulfonates import ATP-binding protein SsuB 2, found in Pseudomonas aeruginosa (strain ATCC 15692 / DSM 22644 / CIP 104116 / JCM 14847 / LMG 12228 / 1C / PRS 101 / PAO1).